We begin with the raw amino-acid sequence, 397 residues long: Elongation factor Tu (397 aa).

One can recognise a tr-type G domain in the interval 10 to 206; sequence KPHCNIGTIG…AVDEYIPQPE (197 aa). Positions 19-26 are G1; it reads GHIDHGKT. 19-26 is a GTP binding site; that stretch reads GHIDHGKT. A Mg(2+)-binding site is contributed by T26. The G2 stretch occupies residues 62–66; that stretch reads GITIS. Positions 83–86 are G3; the sequence is DCPG. GTP contacts are provided by residues 83–87 and 138–141; these read DCPGH and NKCD. The tract at residues 138–141 is G4; the sequence is NKCD. The G5 stretch occupies residues 176-178; that stretch reads SAF.

This sequence belongs to the TRAFAC class translation factor GTPase superfamily. Classic translation factor GTPase family. EF-Tu/EF-1A subfamily. As to quaternary structure, monomer.

It localises to the cytoplasm. It catalyses the reaction GTP + H2O = GDP + phosphate + H(+). Its function is as follows. GTP hydrolase that promotes the GTP-dependent binding of aminoacyl-tRNA to the A-site of ribosomes during protein biosynthesis. The sequence is that of Elongation factor Tu from Cutibacterium acnes (strain DSM 16379 / KPA171202) (Propionibacterium acnes).